A 256-amino-acid polypeptide reads, in one-letter code: MADWSAEQYLKFEDERTRPARDLLAQVWLDDPRRVVDIGCGPGNSTELLVKRWPQAKVTGVDNSADMLRQARERLPGHNFIEANIAHWVAPVGTEVVFANAVFQWVPNHLKHMQRLLGALAPGGVLAVQMPDNLDELSHILMREVAFQEPWREQLSTAAELRDTLPKPGVYYDALRPLCSRLEIWHTVYNHALDSAAAIVEWVRGTGLRPFVDPLELPERKAYLAAYTARIAAAYPPQADGKVLLRFPRIFIVASK.

The protein belongs to the methyltransferase superfamily. Tam family.

It is found in the cytoplasm. It carries out the reaction trans-aconitate + S-adenosyl-L-methionine = (E)-3-(methoxycarbonyl)pent-2-enedioate + S-adenosyl-L-homocysteine. Catalyzes the S-adenosylmethionine monomethyl esterification of trans-aconitate. The chain is Trans-aconitate 2-methyltransferase from Rhodopseudomonas palustris (strain BisA53).